A 266-amino-acid chain; its full sequence is Putative pyruvate, phosphate dikinase regulatory protein (266 aa).

149–156 (GVSRTSKT) contacts ADP.

Belongs to the pyruvate, phosphate/water dikinase regulatory protein family. PDRP subfamily.

The catalysed reaction is N(tele)-phospho-L-histidyl/L-threonyl-[pyruvate, phosphate dikinase] + ADP = N(tele)-phospho-L-histidyl/O-phospho-L-threonyl-[pyruvate, phosphate dikinase] + AMP + H(+). It carries out the reaction N(tele)-phospho-L-histidyl/O-phospho-L-threonyl-[pyruvate, phosphate dikinase] + phosphate + H(+) = N(tele)-phospho-L-histidyl/L-threonyl-[pyruvate, phosphate dikinase] + diphosphate. Its function is as follows. Bifunctional serine/threonine kinase and phosphorylase involved in the regulation of the pyruvate, phosphate dikinase (PPDK) by catalyzing its phosphorylation/dephosphorylation. In Geobacillus sp. (strain WCH70), this protein is Putative pyruvate, phosphate dikinase regulatory protein.